The sequence spans 521 residues: MPPSLPSLQLRRLLLRSFISSSSVNTLQSQPRIISSKPLFSPLPPSRSSIFSTFPSRFFSSETNAESESLDSNEIALSFSKELTGNPDAESQTISQRFNLSFSHITPNPDLILQTLNLSPEAGRAALGFNEWLDSNSNFSHTDETVSFFVDYFGRRKDFKGMLEIISKYKGIAGGKTLESAIDRLVRAGRPKQVTDFFEKMENDYGLKRDKESLTLVVKKLCEKGHASIAEKMVKNTANEIFPDENICDLLISGWCIAEKLDEATRLAGEMSRGGFEIGTKAYNMMLDCVCKLCRKKDPFKLQPEVEKVLLEMEFRGVPRNTETFNVLINNLCKIRRTEEAMTLFGRMGEWGCQPDAETYLVLIRSLYQAARIGEGDEMIDKMKSAGYGELLNKKEYYGFLKILCGIERLEHAMSVFKSMKANGCKPGIKTYDLLMGKMCANNQLTRANGLYKEAAKKGIAVSPKEYRVDPRFMKKKTKEVDSNVKKRETLPEKTARKKKRLKQINMSFVKKPHNKMRRRM.

A mitochondrion-targeting transit peptide spans 1 to 59; sequence MPPSLPSLQLRRLLLRSFISSSSVNTLQSQPRIISSKPLFSPLPPSRSSIFSTFPSRFF. PPR repeat units follow at residues 174-204, 210-240, 244-278, 279-313, 321-355, 356-390, 393-427, and 428-462; these read GGKT…MEND, DKES…TANE, DENI…GFEI, GTKA…LLEM, NTET…GCQP, DAET…GYGE, NKKE…GCKP, and GIKT…GIAV. The segment covering 480-495 has biased composition (basic and acidic residues); the sequence is EVDSNVKKRETLPEKT. Positions 480-499 are disordered; it reads EVDSNVKKRETLPEKTARKK. The short motif at 486-503 is the Nuclear localization signal element; sequence KKRETLPEKTARKKKRLK.

The protein belongs to the PPR family. P subfamily. Interacts with NAP1;1 and TCP8. Able to bind mitochondrial RNA in vitro. Component of the mitochondrial ribosome small subunit. As to expression, expressed in root tips, lateral root primordia and leaf primordia. Highly detected in the mature pollen grains.

It localises to the mitochondrion matrix. The protein resides in the nucleus. Its function is as follows. RNA-binding protein that functions in both mitochondrion and nucleus. In mitochondrion, it is associated with polysomes and may play a role in translation. Required during embryogenesis. In nucleus, might be involved in the regulation of its own gene expression. The sequence is that of Small ribosomal subunit protein mL104 (rPPR9) (PNM1) from Arabidopsis thaliana (Mouse-ear cress).